The primary structure comprises 141 residues: Nucleoside diphosphate kinase (141 aa).

Residues lysine 11, phenylalanine 59, arginine 87, threonine 93, arginine 104, and asparagine 114 each coordinate ATP. Histidine 117 serves as the catalytic Pros-phosphohistidine intermediate.

The protein belongs to the NDK family. Homotetramer. Mg(2+) serves as cofactor.

Its subcellular location is the cytoplasm. The enzyme catalyses a 2'-deoxyribonucleoside 5'-diphosphate + ATP = a 2'-deoxyribonucleoside 5'-triphosphate + ADP. The catalysed reaction is a ribonucleoside 5'-diphosphate + ATP = a ribonucleoside 5'-triphosphate + ADP. Functionally, major role in the synthesis of nucleoside triphosphates other than ATP. The ATP gamma phosphate is transferred to the NDP beta phosphate via a ping-pong mechanism, using a phosphorylated active-site intermediate. The polypeptide is Nucleoside diphosphate kinase (Burkholderia ambifaria (strain MC40-6)).